Here is a 95-residue protein sequence, read N- to C-terminus: Aspartyl/glutamyl-tRNA(Asn/Gln) amidotransferase subunit C (95 aa).

It belongs to the GatC family. In terms of assembly, heterotrimer of A, B and C subunits.

It catalyses the reaction L-glutamyl-tRNA(Gln) + L-glutamine + ATP + H2O = L-glutaminyl-tRNA(Gln) + L-glutamate + ADP + phosphate + H(+). It carries out the reaction L-aspartyl-tRNA(Asn) + L-glutamine + ATP + H2O = L-asparaginyl-tRNA(Asn) + L-glutamate + ADP + phosphate + 2 H(+). Its function is as follows. Allows the formation of correctly charged Asn-tRNA(Asn) or Gln-tRNA(Gln) through the transamidation of misacylated Asp-tRNA(Asn) or Glu-tRNA(Gln) in organisms which lack either or both of asparaginyl-tRNA or glutaminyl-tRNA synthetases. The reaction takes place in the presence of glutamine and ATP through an activated phospho-Asp-tRNA(Asn) or phospho-Glu-tRNA(Gln). This Citrifermentans bemidjiense (strain ATCC BAA-1014 / DSM 16622 / JCM 12645 / Bem) (Geobacter bemidjiensis) protein is Aspartyl/glutamyl-tRNA(Asn/Gln) amidotransferase subunit C.